Here is a 1067-residue protein sequence, read N- to C-terminus: FHIP family protein GL19323 (1067 aa).

A compositionally biased stretch (polar residues) spans 1-11 (MSWLRSSPLRQ). 3 disordered regions span residues 1–31 (MSWL…GSLR), 503–525 (LARP…QPIQ), and 832–1013 (NENS…SEPA). Phosphoserine occurs at positions 508 and 835. The span at 842–858 (QPQTTLSQQQQQQQGQQ) shows a compositional bias: low complexity. Residues 859 to 878 (RSAYATLSAATPVQATQTSA) are compositionally biased toward polar residues. Residues 893–904 (SKSISSMFSRRS) are compositionally biased toward low complexity. Residues 918 to 949 (LVGNNNSGSGQSQPFSSTGTGTCETSLSTNPQ) are compositionally biased toward polar residues. Positions 950 to 979 (SGAAAARSTGTATTANGNSSNSNISIGGST) are enriched in low complexity. Residues 980–996 (QTLSGHSNTTTYSSSTL) are compositionally biased toward polar residues.

This sequence belongs to the FHIP family.

The protein is FHIP family protein GL19323 of Drosophila persimilis (Fruit fly).